The primary structure comprises 120 residues: Small ribosomal subunit protein bS16 (120 aa).

The segment at 81 to 120 (GLAKRPTRNNPQKAEPGEKAKERAAKRAEKAAAPAEDAAA) is disordered. Basic and acidic residues predominate over residues 95-110 (EPGEKAKERAAKRAEK). Residues 111–120 (AAAPAEDAAA) are compositionally biased toward low complexity.

It belongs to the bacterial ribosomal protein bS16 family.

The protein is Small ribosomal subunit protein bS16 of Methylorubrum extorquens (strain CM4 / NCIMB 13688) (Methylobacterium extorquens).